The chain runs to 187 residues: Elongation factor P (187 aa).

This sequence belongs to the elongation factor P family.

The protein localises to the cytoplasm. It functions in the pathway protein biosynthesis; polypeptide chain elongation. In terms of biological role, involved in peptide bond synthesis. Stimulates efficient translation and peptide-bond synthesis on native or reconstituted 70S ribosomes in vitro. Probably functions indirectly by altering the affinity of the ribosome for aminoacyl-tRNA, thus increasing their reactivity as acceptors for peptidyl transferase. The polypeptide is Elongation factor P (Leifsonia xyli subsp. xyli (strain CTCB07)).